Reading from the N-terminus, the 202-residue chain is Peptide methionine sulfoxide reductase A1 (202 aa).

The disordered stretch occupies residues 1–20 (MNILNKLGIGSSRQTNMDPS). Ser189 carries the phosphoserine modification.

The protein belongs to the MsrA Met sulfoxide reductase family.

The protein localises to the cytoplasm. It localises to the cytosol. It carries out the reaction L-methionyl-[protein] + [thioredoxin]-disulfide + H2O = L-methionyl-(S)-S-oxide-[protein] + [thioredoxin]-dithiol. The catalysed reaction is [thioredoxin]-disulfide + L-methionine + H2O = L-methionine (S)-S-oxide + [thioredoxin]-dithiol. Catalyzes the reduction of methionine sulfoxide (MetSO) to methionine in proteins. Plays a protective role against oxidative stress by restoring activity to proteins that have been inactivated by methionine oxidation. MSRA family specifically reduces the MetSO S-enantiomer. This Arabidopsis thaliana (Mouse-ear cress) protein is Peptide methionine sulfoxide reductase A1 (MSRA1).